The sequence spans 181 residues: TATA-box-binding protein (181 aa).

Repeat copies occupy residues 7–83 and 98–173.

Belongs to the TBP family.

General factor that plays a role in the activation of archaeal genes transcribed by RNA polymerase. Binds specifically to the TATA box promoter element which lies close to the position of transcription initiation. The sequence is that of TATA-box-binding protein from Methanococcus aeolicus (strain ATCC BAA-1280 / DSM 17508 / OCM 812 / Nankai-3).